Reading from the N-terminus, the 83-residue chain is U3-theraphotoxin-Cg1a (83 aa).

Residues 1–23 (MRTFTLIAILTCAVLVIFHAAAA) form the signal peptide. A propeptide spanning residues 24–44 (EELEAQDVIETEALATLDEER) is cleaved from the precursor. 3 disulfides stabilise this stretch: Cys-48–Cys-61, Cys-52–Cys-75, and Cys-69–Cys-80.

This sequence belongs to the neurotoxin 12 (Hwtx-2) family. 03 (juruin) subfamily. In terms of processing, contains 3 disulfide bonds. Two different connectivities are observed in similar proteins (C1-C3, C2-C5, C4-C6 or C1-C4, C2-C5, C3-C6). Expressed by the venom gland.

Its subcellular location is the secreted. Probable ion channel inhibitor. This is U3-theraphotoxin-Cg1a from Chilobrachys guangxiensis (Chinese earth tiger tarantula).